Here is a 169-residue protein sequence, read N- to C-terminus: Regulator of sigma D (169 aa).

Belongs to the Rsd/AlgQ family. In terms of assembly, interacts with RpoD.

It is found in the cytoplasm. Functionally, binds RpoD and negatively regulates RpoD-mediated transcription activation by preventing the interaction between the primary sigma factor RpoD with the catalytic core of the RNA polymerase and with promoter DNA. May be involved in replacement of the RNA polymerase sigma subunit from RpoD to RpoS during the transition from exponential growth to the stationary phase. The sequence is that of Regulator of sigma D from Yersinia pestis.